Reading from the N-terminus, the 55-residue chain is UPF0391 membrane protein Meso_3110 (55 aa).

A run of 2 helical transmembrane segments spans residues W4 to A24 and I30 to L50.

It belongs to the UPF0391 family.

The protein localises to the cell membrane. This chain is UPF0391 membrane protein Meso_3110, found in Chelativorans sp. (strain BNC1).